Here is a 607-residue protein sequence, read N- to C-terminus: Polyadenylate-binding protein 1-like (607 aa).

RRM domains are found at residues 11–89 (SSLY…WSHR), 99–175 (GNIF…HFKS), 191–268 (TNIY…RAQK), and 294–370 (VNLY…LAQR). The PABC domain maps to 523–600 (HQPLTVSMLA…AVAVLQVHRE (78 aa)).

Belongs to the polyadenylate-binding protein type-1 family. Expressed in ovary and testis.

It localises to the cytoplasm. Its function is as follows. Poly(A)-binding protein involved in oocyte maturation and early embryo development. It is required for cytosolic mRNA polyadenylation and translational activation of maternally stored mRNA in oocytes. This is Polyadenylate-binding protein 1-like from Mus musculus (Mouse).